The primary structure comprises 628 residues: EF-hand calcium-binding domain-containing protein 7 (628 aa).

The segment covering 1–22 (MASNPGSDAALGTQNPLLSGSP) has biased composition (polar residues). The interval 1–24 (MASNPGSDAALGTQNPLLSGSPRT) is disordered. 2 consecutive EF-hand domains span residues 102-137 (TSKAELLKSFKKLDVNDDGAILHSDLQKYLTKRGEK) and 138-173 (MTQEEVNAVINLADINANGKFDYVKFCKLYMTTSEQ). The tract at residues 192 to 231 (QFGSHMEGSPERGPSPAPKPSPRVIRKNDQETFSSKGDTS) is disordered. Residues Ser200 and Ser212 each carry the phosphoserine modification. Residues 222-231 (ETFSSKGDTS) show a composition bias toward polar residues. An EF-hand 3 domain is found at 402–437 (EFRSTLSEIFEVIDLDGNGLISLEEYNFFELRTSGE). Residues Asp415, Asp417, Asn419, and Glu426 each contribute to the Ca(2+) site.

In terms of assembly, component of the EvC complex composed of EFCAB7, IQCE, EVC2 and EVC; built from two subcomplexes, EVC2:EVC and EFCAB7:IQCE. Interacts (via EF-hand 1 and 2) with IQCE (via N-terminus); this interaction anchors the EVC-EVC2 complex in a signaling microdomain at the base of cilia and stimulates the Hedgehog (Hh) pathway. Interacts with EVC2 (via N-terminal end). Interacts with EVC.

It localises to the cell projection. The protein resides in the cilium membrane. Its function is as follows. Component of the EvC complex that positively regulates ciliary Hedgehog (Hh) signaling. Required for the localization of the EVC2:EVC subcomplex at the base of primary cilia. This is EF-hand calcium-binding domain-containing protein 7 (Efcab7) from Mus musculus (Mouse).